We begin with the raw amino-acid sequence, 341 residues long: NADH-quinone oxidoreductase subunit H 2 (341 aa).

A run of 8 helical transmembrane segments spans residues 13 to 33 (IVVI…IAYI), 82 to 102 (GVFL…WAVI), 115 to 135 (VGVL…IMAG), 161 to 181 (IGFV…TAIV), 190 to 210 (VLGW…VSAL), 242 to 262 (LFVL…TILF), 277 to 297 (WVPG…MFAM), and 317 to 337 (VFLP…QFAG).

Belongs to the complex I subunit 1 family. NDH-1 is composed of 14 different subunits. Subunits NuoA, H, J, K, L, M, N constitute the membrane sector of the complex.

It localises to the cell inner membrane. The enzyme catalyses a quinone + NADH + 5 H(+)(in) = a quinol + NAD(+) + 4 H(+)(out). In terms of biological role, NDH-1 shuttles electrons from NADH, via FMN and iron-sulfur (Fe-S) centers, to quinones in the respiratory chain. The immediate electron acceptor for the enzyme in this species is believed to be ubiquinone. Couples the redox reaction to proton translocation (for every two electrons transferred, four hydrogen ions are translocated across the cytoplasmic membrane), and thus conserves the redox energy in a proton gradient. This subunit may bind ubiquinone. The protein is NADH-quinone oxidoreductase subunit H 2 of Rhodopseudomonas palustris (strain HaA2).